A 592-amino-acid polypeptide reads, in one-letter code: Arginine--tRNA ligase (592 aa).

Residues 129 to 139 (ANPTGPLHVGH) carry the 'HIGH' region motif.

It belongs to the class-I aminoacyl-tRNA synthetase family. As to quaternary structure, monomer.

The protein localises to the cytoplasm. The catalysed reaction is tRNA(Arg) + L-arginine + ATP = L-arginyl-tRNA(Arg) + AMP + diphosphate. The chain is Arginine--tRNA ligase from Dichelobacter nodosus (strain VCS1703A).